A 145-amino-acid chain; its full sequence is Transmembrane protein CCDC163 (145 aa).

The chain crosses the membrane as a helical span at residues 38–54; that stretch reads LIGLCICFFCSSGCIFL.

The protein localises to the membrane. The polypeptide is Transmembrane protein CCDC163 (Homo sapiens (Human)).